The sequence spans 55 residues: Photosystem I reaction center subunit IX (55 aa).

The chain crosses the membrane as a helical span at residues 7–27 (YLSVAPVLSTLWFGSLAGLLI).

This sequence belongs to the PsaJ family.

It localises to the plastid. The protein resides in the chloroplast thylakoid membrane. May help in the organization of the PsaE and PsaF subunits. This Gossypium barbadense (Sea Island cotton) protein is Photosystem I reaction center subunit IX.